The chain runs to 792 residues: Kinesin-related protein 2 (792 aa).

Disordered stretches follow at residues 22 to 50 (TINSRPSLLRKPASSSSQSNDRISYPPST) and 162 to 183 (NNININSNNSSNSNNNILSPVQ). Residues 34-50 (ASSSSQSNDRISYPPST) are compositionally biased toward polar residues. Residues 284–423 (RLSLSIQDIK…LEKSRSDEKV (140 aa)) are a coiled coil. The Kinesin motor domain maps to 437–781 (NIRVFCRIRP…LRFAAKVNSC (345 aa)). Residue 528 to 535 (GQTGSGKT) coordinates ATP.

It belongs to the TRAFAC class myosin-kinesin ATPase superfamily. Kinesin family. NCD subfamily.

Its subcellular location is the nucleus. It localises to the cytoplasm. The protein resides in the cytoskeleton. The protein localises to the spindle. Functionally, microtubule-dependent motor that is probably involved in microtubule organization in the mitotic spindle. This is Kinesin-related protein 2 (kif2) from Dictyostelium discoideum (Social amoeba).